We begin with the raw amino-acid sequence, 461 residues long: Argininosuccinate lyase (461 aa).

It belongs to the lyase 1 family. Argininosuccinate lyase subfamily.

It localises to the cytoplasm. It catalyses the reaction 2-(N(omega)-L-arginino)succinate = fumarate + L-arginine. The protein operates within amino-acid biosynthesis; L-arginine biosynthesis; L-arginine from L-ornithine and carbamoyl phosphate: step 3/3. This Dehalococcoides mccartyi (strain CBDB1) protein is Argininosuccinate lyase.